The sequence spans 382 residues: D-galactonate dehydratase (382 aa).

D183 is a Mg(2+) binding site. Catalysis depends on H185, which acts as the Proton donor. Mg(2+) contacts are provided by E209 and E235. The active-site Proton acceptor is H285.

The protein belongs to the mandelate racemase/muconate lactonizing enzyme family. GalD subfamily. It depends on Mg(2+) as a cofactor.

The enzyme catalyses D-galactonate = 2-dehydro-3-deoxy-D-galactonate + H2O. It participates in carbohydrate acid metabolism; D-galactonate degradation; D-glyceraldehyde 3-phosphate and pyruvate from D-galactonate: step 1/3. Its function is as follows. Catalyzes the dehydration of D-galactonate to 2-keto-3-deoxy-D-galactonate. This is D-galactonate dehydratase from Escherichia fergusonii (strain ATCC 35469 / DSM 13698 / CCUG 18766 / IAM 14443 / JCM 21226 / LMG 7866 / NBRC 102419 / NCTC 12128 / CDC 0568-73).